We begin with the raw amino-acid sequence, 383 residues long: uncharacterized protein (383 aa).

It belongs to the peptidase M20 family.

This is an uncharacterized protein from Staphylococcus aureus (strain bovine RF122 / ET3-1).